Consider the following 311-residue polypeptide: MATYLEFEEKIKKIEEDIIVAKTKADEPAVDILEKKLEKEVEKTFKNLNDYQKLQLARHPDRPYALDYISGLLKNAYEVHGDRHYVDDHAIVCYFGFIDNQKVLVIGEQKGRGTKEKLQRNFGMPSPEGYRKALRAAKMADKFQIPILMLVDTPGAYPGIGAEERNQSEAIAKNLFEFADLTTPTISVVIGEGGSGGALAISVADKLAMMRYSVYAVISPEGCSAILWNDPTKVETAANALKITAENLKELNLIDDVINEPLIGAHRQKEQAIFALKEYFIKSLAELKKLTPQERLDKKYQKLMNLGSFTK.

Residues 36–286 form the CoA carboxyltransferase C-terminal domain; it reads KLEKEVEKTF…KEYFIKSLAE (251 aa).

It belongs to the AccA family. In terms of assembly, acetyl-CoA carboxylase is a heterohexamer composed of biotin carboxyl carrier protein (AccB), biotin carboxylase (AccC) and two subunits each of ACCase subunit alpha (AccA) and ACCase subunit beta (AccD).

The protein localises to the cytoplasm. It carries out the reaction N(6)-carboxybiotinyl-L-lysyl-[protein] + acetyl-CoA = N(6)-biotinyl-L-lysyl-[protein] + malonyl-CoA. The protein operates within lipid metabolism; malonyl-CoA biosynthesis; malonyl-CoA from acetyl-CoA: step 1/1. In terms of biological role, component of the acetyl coenzyme A carboxylase (ACC) complex. First, biotin carboxylase catalyzes the carboxylation of biotin on its carrier protein (BCCP) and then the CO(2) group is transferred by the carboxyltransferase to acetyl-CoA to form malonyl-CoA. This Aliarcobacter butzleri (strain RM4018) (Arcobacter butzleri) protein is Acetyl-coenzyme A carboxylase carboxyl transferase subunit alpha.